The chain runs to 569 residues: Lysine--tRNA ligase (569 aa).

Residues Glu414 and Glu421 each coordinate Mg(2+).

The protein belongs to the class-II aminoacyl-tRNA synthetase family. In terms of assembly, homodimer. It depends on Mg(2+) as a cofactor.

It localises to the cytoplasm. The catalysed reaction is tRNA(Lys) + L-lysine + ATP = L-lysyl-tRNA(Lys) + AMP + diphosphate. This Christiangramia forsetii (strain DSM 17595 / CGMCC 1.15422 / KT0803) (Gramella forsetii) protein is Lysine--tRNA ligase.